We begin with the raw amino-acid sequence, 307 residues long: Serine/threonine-protein phosphatase PP2A-1 catalytic subunit (307 aa).

4 residues coordinate Mn(2+): D54, H56, D82, and N114. H115 (proton donor) is an active-site residue. H164 and H238 together coordinate Mn(2+). Residues 286–307 (FEPAPRRGAEGEVNRRTPDYFL) form a disordered region. The span at 289–307 (APRRGAEGEVNRRTPDYFL) shows a compositional bias: basic and acidic residues.

The protein belongs to the PPP phosphatase family. PP-2A subfamily. It depends on Mn(2+) as a cofactor.

It catalyses the reaction O-phospho-L-seryl-[protein] + H2O = L-seryl-[protein] + phosphate. It carries out the reaction O-phospho-L-threonyl-[protein] + H2O = L-threonyl-[protein] + phosphate. The polypeptide is Serine/threonine-protein phosphatase PP2A-1 catalytic subunit (Acetabularia peniculus (Green alga)).